Reading from the N-terminus, the 259-residue chain is Type III pantothenate kinase (259 aa).

6 to 13 (DIGNTNVV) contacts ATP. 107–110 (GADR) contacts substrate. D109 functions as the Proton acceptor in the catalytic mechanism. D129 lines the K(+) pocket. T132 serves as a coordination point for ATP. Position 184 (T184) interacts with substrate.

Belongs to the type III pantothenate kinase family. Homodimer. NH4(+) is required as a cofactor. It depends on K(+) as a cofactor.

The protein localises to the cytoplasm. The enzyme catalyses (R)-pantothenate + ATP = (R)-4'-phosphopantothenate + ADP + H(+). It participates in cofactor biosynthesis; coenzyme A biosynthesis; CoA from (R)-pantothenate: step 1/5. Functionally, catalyzes the phosphorylation of pantothenate (Pan), the first step in CoA biosynthesis. The polypeptide is Type III pantothenate kinase (Thermomicrobium roseum (strain ATCC 27502 / DSM 5159 / P-2)).